The following is a 150-amino-acid chain: General odorant-binding protein 19d (150 aa).

An N-terminal signal peptide occupies residues 1-23 (MSHLVHLTVLLLVGILCLGATSA). Disulfide bonds link Cys41-Cys72, Cys68-Cys126, and Cys116-Cys135.

This sequence belongs to the PBP/GOBP family. Expressed in the antenna, mostly on the anterior surface of the third antennal segment. Also detected in the maxillary palps and in cells at the bases of the taste hairs on the proboscis and internal taste organs of the head.

The protein localises to the secreted. The protein is General odorant-binding protein 19d (Obp19d) of Drosophila melanogaster (Fruit fly).